Reading from the N-terminus, the 687-residue chain is Leucine-rich repeat and fibronectin type III domain-containing protein 1-like protein (687 aa).

The signal sequence occupies residues 1–17 (MEWLIFSLLLLAVSASG). In terms of domain architecture, LRRNT spans 18 to 51 (QLCPKRCMCQNLSPSLAILCAKTGLLFVPTVIDR). Residues 18 to 527 (QLCPKRCMCQ…LRSHFLGGTM (510 aa)) are Extracellular-facing. LRR repeat units lie at residues 52–73 (RTVE…DFAN), 76–97 (SLLH…TFAD), 100–121 (RLRA…HFRG), 124–145 (NLRH…AFDD), 149–170 (TLED…TIGR), 173–194 (NVNT…IFSN), and 197–218 (KLAR…PLFL). Asn73 carries N-linked (GlcNAc...) asparagine glycosylation. One can recognise an LRRCT domain in the interval 241 to 287 (NPLHCNCELLWLRRLTREDDLETCASPPDLTAKYFWTIPEEEFICDP). The 90-residue stretch at 287–376 (PPVITRKSPK…STGTVELVVS (90 aa)) folds into the Ig-like domain. A disulfide bridge connects residues Cys309 and Cys358. Residues Asn331, Asn340, Asn346, Asn383, Asn410, and Asn450 are each glycosylated (N-linked (GlcNAc...) asparagine). Residues 384–412 (STNRIREPDPGPSDILTSAKSTSSVSNET) are disordered. A compositionally biased stretch (polar residues) spans 398 to 412 (ILTSAKSTSSVSNET). Residues 415–510 (QERKVVLAEL…VGCVTFVTET (96 aa)) form the Fibronectin type-III domain. Residues 528 to 548 (IIIIGGIIVASVLVFIIILMI) traverse the membrane as a helical segment. Topologically, residues 549–687 (RYKVYSQHGA…AQRDWSDFKI (139 aa)) are cytoplasmic. Disordered regions lie at residues 563 to 601 (GTAM…GSLG) and 630 to 687 (EDIV…DFKI). 2 stretches are compositionally biased toward polar residues: residues 565-576 (AMTNVRSQTNGG) and 657-672 (EGTS…SPQV). Positions 673–687 (SDEKKAQRDWSDFKI) are enriched in basic and acidic residues.

It belongs to the LRFN family.

Its subcellular location is the membrane. It is found in the synapse. In terms of biological role, may be involved in the regulation of excitatory synapses. The sequence is that of Leucine-rich repeat and fibronectin type III domain-containing protein 1-like protein (lrfn1l) from Danio rerio (Zebrafish).